An 88-amino-acid chain; its full sequence is SPbeta prophage-derived protein BhlB (88 aa).

Helical transmembrane passes span 15–35 (LLAIALLNQIMVMLGKAAFII) and 45–65 (DCLYTIFTIVFTTSTTTAAWF).

This sequence belongs to the SPP1 holin family.

The protein localises to the cell membrane. Its function is as follows. May be involved in the secretion of the autolysin BlyA. In Bacillus subtilis (strain 168), this protein is SPbeta prophage-derived protein BhlB (bhlB).